The sequence spans 62 residues: KIDGYPVDNWNCKRICWYNNKYCYDLCKGLKADSGYCWGWTLSCYCEGLPDNARIKRGGRCN.

Residues 2–62 form the LCN-type CS-alpha/beta domain; sequence IDGYPVDNWN…ARIKRGGRCN (61 aa). 4 disulfides stabilise this stretch: Cys12/Cys61, Cys16/Cys37, Cys23/Cys44, and Cys27/Cys46.

Expressed by the venom gland.

It is found in the secreted. Its function is as follows. This neurotoxin acts on sodium and calcium channels. Potently inhibits native voltage-gated T-type calcium channel activity in mouse male germ cells and weakly blocks Cav3.3/CACNA1I channels expressed in Xenopus oocytes. In addition, significantly slows the inactivation of activated recombinant sodium channels (Nav1.5/SCN5A). This is Kurtoxin-like I from Parabuthus granulatus (Granulated thick-tailed scorpion).